The following is a 1829-amino-acid chain: Iron-regulated protein FrpC (1829 aa).

22 Hemolysin-type calcium-binding repeats span residues 869–886 (FGHN…NDTL), 887–904 (IGGA…SDTY), 1015–1032 (NGGL…DDLL), 1033–1050 (NGDA…NDTL), 1051–1068 (DGGE…NDAL), 1069–1086 (NGGE…NDTL), 1087–1104 (IGGA…SDTY), 1215–1232 (NGGL…DDLL), 1233–1250 (NGDA…NDTL), 1251–1268 (DGGE…NDAL), 1269–1286 (NGGE…NDTL), 1287–1304 (IGGA…SDTY), 1415–1432 (NGGL…DDLL), 1433–1450 (NGDA…NDTL), 1451–1468 (NGGE…NDAL), 1469–1486 (NGGE…NDTL), 1487–1504 (IGGA…SDTY), 1615–1632 (NGGL…DDLL), 1633–1650 (NGDA…NDTL), 1651–1668 (DGGE…NDAL), 1669–1686 (NGGE…NDTL), and 1687–1704 (IGGA…SDTY). The disordered stretch occupies residues 1671 to 1690 (GEGNDHLNGEDGNDTLIGGA).

The protein belongs to the RTX prokaryotic toxin (TC 1.C.11) family.

It is found in the cell outer membrane. Its subcellular location is the secreted. Its function is as follows. May participate in the pathogenesis of meningococcal disease. The sequence is that of Iron-regulated protein FrpC (frpC) from Neisseria meningitidis serogroup B (strain ATCC BAA-335 / MC58).